Here is a 303-residue protein sequence, read N- to C-terminus: ATP-dependent Clp protease ATP-binding subunit CLPT3, chloroplastic (303 aa).

The N-terminal 37 residues, 1–37 (MLLANAPHNGCSRLQQVTLLRASGAKLHRKRALTVVA), are a transit peptide targeting the chloroplast. Disordered regions lie at residues 185–214 (ASTE…RDSD) and 278–303 (RDDN…DEYE).

It belongs to the ClpA/ClpB family.

The protein localises to the plastid. The protein resides in the chloroplast. Its function is as follows. Accessory protein regulating the assembly of the plastid Clp protease system. This chain is ATP-dependent Clp protease ATP-binding subunit CLPT3, chloroplastic, found in Chlamydomonas reinhardtii (Chlamydomonas smithii).